Consider the following 288-residue polypeptide: ATP phosphoribosyltransferase (288 aa).

Belongs to the ATP phosphoribosyltransferase family. Long subfamily. It depends on Mg(2+) as a cofactor.

Its subcellular location is the cytoplasm. The enzyme catalyses 1-(5-phospho-beta-D-ribosyl)-ATP + diphosphate = 5-phospho-alpha-D-ribose 1-diphosphate + ATP. It participates in amino-acid biosynthesis; L-histidine biosynthesis; L-histidine from 5-phospho-alpha-D-ribose 1-diphosphate: step 1/9. Its activity is regulated as follows. Feedback inhibited by histidine. In terms of biological role, catalyzes the condensation of ATP and 5-phosphoribose 1-diphosphate to form N'-(5'-phosphoribosyl)-ATP (PR-ATP). Has a crucial role in the pathway because the rate of histidine biosynthesis seems to be controlled primarily by regulation of HisG enzymatic activity. In Methanocaldococcus jannaschii (strain ATCC 43067 / DSM 2661 / JAL-1 / JCM 10045 / NBRC 100440) (Methanococcus jannaschii), this protein is ATP phosphoribosyltransferase (hisG).